A 118-amino-acid polypeptide reads, in one-letter code: DNA-directed RNA polymerase subunit omega (118 aa).

The segment at 78 to 104 (DEPEEDSMAMLMGGGQPDKPAEDDMSE) is disordered.

Belongs to the RNA polymerase subunit omega family. The RNAP catalytic core consists of 2 alpha, 1 beta, 1 beta' and 1 omega subunit. When a sigma factor is associated with the core the holoenzyme is formed, which can initiate transcription.

It catalyses the reaction RNA(n) + a ribonucleoside 5'-triphosphate = RNA(n+1) + diphosphate. Its function is as follows. Promotes RNA polymerase assembly. Latches the N- and C-terminal regions of the beta' subunit thereby facilitating its interaction with the beta and alpha subunits. The protein is DNA-directed RNA polymerase subunit omega of Dinoroseobacter shibae (strain DSM 16493 / NCIMB 14021 / DFL 12).